Consider the following 116-residue polypeptide: Iron-sulfur cluster insertion protein ErpA (116 aa).

The iron-sulfur cluster site is built by Cys-44, Cys-108, and Cys-110.

It belongs to the HesB/IscA family. In terms of assembly, homodimer. It depends on iron-sulfur cluster as a cofactor.

Its function is as follows. Required for insertion of 4Fe-4S clusters for at least IspG. The chain is Iron-sulfur cluster insertion protein ErpA from Ectopseudomonas mendocina (strain ymp) (Pseudomonas mendocina).